The chain runs to 485 residues: Glucose-6-phosphate 1-dehydrogenase (485 aa).

Residues Arg-46, 89-90 (DI), and Lys-144 contribute to the NADP(+) site. Substrate contacts are provided by His-174, Lys-178, Glu-212, and Asp-231. His-236 (proton acceptor) is an active-site residue. Position 334 (Lys-334) interacts with substrate.

The protein belongs to the glucose-6-phosphate dehydrogenase family.

It catalyses the reaction D-glucose 6-phosphate + NADP(+) = 6-phospho-D-glucono-1,5-lactone + NADPH + H(+). The protein operates within carbohydrate degradation; pentose phosphate pathway; D-ribulose 5-phosphate from D-glucose 6-phosphate (oxidative stage): step 1/3. Its function is as follows. Catalyzes the oxidation of glucose 6-phosphate to 6-phosphogluconolactone. In Zymomonas mobilis subsp. mobilis (strain ATCC 31821 / ZM4 / CP4), this protein is Glucose-6-phosphate 1-dehydrogenase.